A 1247-amino-acid chain; its full sequence is Lon protease homolog 2, peroxisomal (1247 aa).

The Lon N-terminal domain occupies 22–402 (LPTYTLDSNL…LINEMILQLI (381 aa)). Disordered stretches follow at residues 76–103 (SGNS…ETYH), 447–503 (TKNR…DVDD), and 626–655 (DQSD…SPTS). Positions 459 to 477 (PGPASSSGPSFSNGKSSPG) are enriched in low complexity. Residues 626–639 (DQSDKSQPIKDNSK) are compositionally biased toward basic and acidic residues. Position 721 to 728 (721 to 728 (GPPGTGKT)) interacts with ATP. The 242-residue stretch at 989 to 1230 (TVGVGVVHGL…YDIIKIVWNE (242 aa)) folds into the Lon proteolytic domain. Residues serine 1099 and lysine 1142 contribute to the active site.

The protein belongs to the peptidase S16 family.

Its subcellular location is the peroxisome matrix. It catalyses the reaction Hydrolysis of proteins in presence of ATP.. ATP-dependent serine protease that mediates the selective degradation of misfolded and unassembled polypeptides in the peroxisomal matrix. Necessary for type 2 peroxisome targeting signal (PTS2)-containing protein processing and facilitates peroxisome matrix protein import. The polypeptide is Lon protease homolog 2, peroxisomal (Candida dubliniensis (strain CD36 / ATCC MYA-646 / CBS 7987 / NCPF 3949 / NRRL Y-17841) (Yeast)).